Here is a 433-residue protein sequence, read N- to C-terminus: MAPARQELQHESRCRPSRTVDAWRAAVATRGRHMETPGYRRRTRCGGWGLPRSVSSLAAVGLLCTALTTFICWGQLPPLPWASPAPQRLVGVLLWWEPFRGRGGYPKSPPDCSLRFNISGCRLLTDRAAYGEAQAVLFHHRDLVKELHDWPPPWGARERTDKALVLRVFDDQEGAVTLTGKALETVGSRPPGQRWVWMNFESPSHTPGLRGLAKDLFNWTLSYRTDSDVFVPYGFLYSRSDPTEQPSGLGPQLARKRGLVAWVVSNWNEHQARVRYYHQLSRHVSVDVFGRTGPGRPVPAIGLLHTVARYKFYLAFENSRHVDYITEKLWRNAFLAGAVPVVLGPDRANYERFVPRGAFIHVDDFPNAASLAAYLLFLDRNVAVYRRYFRWRRSFAVHITSFWDEQWCRTCQAVQTSGDQPKSIHNLADWFQR.

The Cytoplasmic portion of the chain corresponds to 1–52; it reads MAPARQELQHESRCRPSRTVDAWRAAVATRGRHMETPGYRRRTRCGGWGLPR. The chain crosses the membrane as a helical; Signal-anchor for type II membrane protein span at residues 53-74; sequence SVSSLAAVGLLCTALTTFICWG. Over 75–433 the chain is Lumenal; sequence QLPPLPWASP…IHNLADWFQR (359 aa). 2 N-linked (GlcNAc...) asparagine glycosylation sites follow: N117 and N218.

Belongs to the glycosyltransferase 10 family. Highest expression in stomach and colon. It is also expressed in the lung, testis, uterus, small intestine and to a lesser extent in spleen, and ovary. Present in trace amounts in brain, thymus, heart, smooth muscle, kidney and bone marrow. Not found in liver, salivary gland and pancreas.

Its subcellular location is the golgi apparatus. The protein resides in the golgi stack membrane. The catalysed reaction is a beta-D-galactosyl-(1-&gt;4)-N-acetyl-beta-D-glucosaminyl derivative + GDP-beta-L-fucose = a beta-D-galactosyl-(1-&gt;4)-[alpha-L-fucosyl-(1-&gt;3)]-N-acetyl-beta-D-glucosaminyl derivative + GDP + H(+). It carries out the reaction an N-acetyl-alpha-neuraminyl-(2-&gt;3)-beta-D-galactosyl-(1-&gt;4)-N-acetyl-beta-D-glucosaminyl derivative + GDP-beta-L-fucose = an alpha-Neu5Ac-(2-&gt;3)-beta-D-Gal-(1-&gt;4)-[alpha-L-Fuc-(1-&gt;3)]-beta-D-GlcNAc derivative + GDP + H(+). The enzyme catalyses an alpha-Neu5Ac-(2-&gt;3)-beta-D-Gal-(1-&gt;4)-beta-D-GlcNAc-(1-&gt;3)-beta-D-Gal-(1-&gt;4)-beta-D-GlcNAc derivative + GDP-beta-L-fucose = an alpha-Neu5Ac-(2-&gt;3)-beta-D-Gal-(1-&gt;4)-beta-D-GlcNAc-(1-&gt;3)-beta-D-Gal-(1-&gt;4)-[alpha-L-Fuc-(1-&gt;3)]-beta-D-GlcNAc derivative + GDP + H(+). It catalyses the reaction an alpha-Neu5Ac-(2-&gt;3)-beta-D-Gal-(1-&gt;4)-beta-D-GlcNAc6S derivative + GDP-beta-L-fucose = an alpha-Neu5Ac-(2-&gt;3)-beta-D-Gal-(1-&gt;4)-[alpha-L-Fuc-(1-&gt;3)]-beta-D-GlcNAc6S derivative + GDP + H(+). It functions in the pathway protein modification; protein glycosylation. Functionally, catalyzes alpha(1-&gt;3) linkage of fucosyl moiety transferred from GDP-beta-L-fucose to N-acetyl glucosamine (GlcNAc) within type 2 lactosamine (LacNAc, Gal-beta(1-&gt;4)GlcNAc) glycan attached to N- or O-linked glycoproteins. Robustly fucosylates nonsialylated distal LacNAc unit of the polylactosamine chain to form Lewis X antigen (CD15), a glycan determinant known to mediate important cellular functions in development and immunity. Fucosylates with lower efficiency sialylated LacNAc acceptors to form sialyl Lewis X and 6-sulfo sialyl Lewis X determinants that serve as recognition epitopes for C-type lectins. Together with FUT7 contributes to SELE, SELL and SELP selectin ligand biosynthesis and selectin-dependent lymphocyte homing, leukocyte migration and blood leukocyte homeostasis. In a cell type specific manner, may also fucosylate the internal LacNAc unit of the polylactosamine chain to form VIM-2 antigen that serves as recognition epitope for SELE. The chain is Alpha-(1,3)-fucosyltransferase 4 (Fut4) from Mus musculus (Mouse).